We begin with the raw amino-acid sequence, 235 residues long: Purine nucleoside phosphorylase DeoD-type (235 aa).

An a purine D-ribonucleoside-binding site is contributed by histidine 4. Phosphate contacts are provided by residues glycine 20, arginine 24, arginine 43, and arginine 87–threonine 90. A purine D-ribonucleoside is bound by residues glutamate 179–glutamate 181 and serine 203–aspartate 204. The Proton donor role is filled by aspartate 204.

This sequence belongs to the PNP/UDP phosphorylase family. Homohexamer; trimer of homodimers.

It catalyses the reaction a purine D-ribonucleoside + phosphate = a purine nucleobase + alpha-D-ribose 1-phosphate. It carries out the reaction a purine 2'-deoxy-D-ribonucleoside + phosphate = a purine nucleobase + 2-deoxy-alpha-D-ribose 1-phosphate. In terms of biological role, catalyzes the reversible phosphorolytic breakdown of the N-glycosidic bond in the beta-(deoxy)ribonucleoside molecules, with the formation of the corresponding free purine bases and pentose-1-phosphate. This chain is Purine nucleoside phosphorylase DeoD-type, found in Clostridium perfringens (strain SM101 / Type A).